Consider the following 169-residue polypeptide: Ribosome maturation factor RimM (169 aa).

The PRC barrel domain maps to 92–166 (NKEYYWNDIF…IVIDLTNLNN (75 aa)).

Belongs to the RimM family. As to quaternary structure, binds ribosomal protein uS19.

It localises to the cytoplasm. In terms of biological role, an accessory protein needed during the final step in the assembly of 30S ribosomal subunit, possibly for assembly of the head region. Essential for efficient processing of 16S rRNA. May be needed both before and after RbfA during the maturation of 16S rRNA. It has affinity for free ribosomal 30S subunits but not for 70S ribosomes. In Buchnera aphidicola subsp. Cinara cedri (strain Cc), this protein is Ribosome maturation factor RimM.